The chain runs to 105 residues: Mini zinc finger protein 1 (105 aa).

The interval 1–29 (MGPQQDRSAAKPYANGSTAAAAAAGRKEN) is disordered. The ZF-HD dimerization-type; degenerate zinc-finger motif lies at 35–84 (YRECQRNHAASIGGHAVDGCREFMASGAEGTAAALLCAACGCHRSFHRRE).

Homo- and heterodimers.

The protein localises to the cytoplasm. Functionally, inhibits zinc finger homeodomain (ZHD) transcription factors, by interacting with them to prevent both their nuclear localization and their DNA-binding properties. The polypeptide is Mini zinc finger protein 1 (MIF1) (Oryza sativa subsp. indica (Rice)).